The chain runs to 198 residues: Dermorphin-2 (198 aa).

The N-terminal stretch at 1–20 is a signal peptide; that stretch reads MSFLKKSLLLILFLGLVSLS. Positions 21 to 45 are excised as a propeptide; it reads VCKEEKRVSEEENENEENHEEGSEM. Residues 24 to 198 are disordered; sequence EEKRVSEEEN…AFGYPSGEAK (175 aa). The residue at position 49 (alanine 49) is a D-alanine (Ala). The residue at position 54 (serine 54) is a Serine amide. A compositionally biased stretch (basic and acidic residues) spans 56–65; it reads EAKKIKRESE. Residues 56-80 constitute a propeptide that is removed on maturation; sequence EAKKIKRESEEEKEIEENHEEGSEM. Alanine 84 is subject to D-alanine (Ala). At serine 89 the chain carries Serine amide. The propeptide occupies 91 to 115; the sequence is EAKKIKRESEEENENEENHEEGSEM. A compositionally biased stretch (acidic residues) spans 100–109; the sequence is EEENENEENH. Alanine 119 carries the D-alanine (Ala) modification. Serine 124 carries the serine amide modification. Residues 126–135 show a composition bias toward basic and acidic residues; it reads EAKKIKRESE. A propeptide spanning residues 126–150 is cleaved from the precursor; it reads EAKKIKRESEEEKEIEENHEEGSEM. The residue at position 154 (alanine 154) is a D-alanine (Ala). Serine 159 carries the post-translational modification Serine amide. Residues 161 to 185 constitute a propeptide that is removed on maturation; the sequence is EAKKIKRESEEENENEENHEEGSEM. Positions 170–179 are enriched in acidic residues; it reads EEENENEENH. D-alanine (Ala) is present on alanine 189. Serine 194 carries the post-translational modification Serine amide. Residues 196–198 constitute a propeptide that is removed on maturation; it reads EAK.

It belongs to the frog skin active peptide (FSAP) family. Dermorphin subfamily. As to expression, expressed by the skin glands.

It localises to the secreted. Dermorphin has a very potent opiate-like activity. It has high affinity and selectivity for mu-type opioid receptors. The chain is Dermorphin-2 from Phyllomedusa sauvagei (Sauvage's leaf frog).